The chain runs to 571 residues: Glutamate--tRNA ligase (571 aa).

The 'HIGH' region signature appears at Pro110–Ser120.

Belongs to the class-I aminoacyl-tRNA synthetase family. Glutamate--tRNA ligase type 2 subfamily.

It localises to the cytoplasm. The catalysed reaction is tRNA(Glu) + L-glutamate + ATP = L-glutamyl-tRNA(Glu) + AMP + diphosphate. Catalyzes the attachment of glutamate to tRNA(Glu) in a two-step reaction: glutamate is first activated by ATP to form Glu-AMP and then transferred to the acceptor end of tRNA(Glu). This Methanosarcina barkeri (strain Fusaro / DSM 804) protein is Glutamate--tRNA ligase.